We begin with the raw amino-acid sequence, 331 residues long: UDP-glucose 4-epimerase (331 aa).

Residues 11 to 12, 31 to 36, 51 to 52, 73 to 77, N92, T117, Y141, K145, and F169 contribute to the NAD(+) site; these read YI, DNLITG, DI, and FAAFS. Residues T117 and Y141 each contribute to the substrate site. The active-site Proton acceptor is Y141. Substrate-binding positions include N170, 189 to 190, 206 to 208, R221, and 282 to 285; these read HI, QIY, and RAGD.

The protein belongs to the NAD(P)-dependent epimerase/dehydratase family. Homodimer. NAD(+) serves as cofactor.

The catalysed reaction is UDP-alpha-D-glucose = UDP-alpha-D-galactose. It participates in carbohydrate metabolism; galactose metabolism. The polypeptide is UDP-glucose 4-epimerase (galE) (Lacticaseibacillus casei (Lactobacillus casei)).